A 474-amino-acid chain; its full sequence is Probable dipeptidase B (474 aa).

Cys-11 is an active-site residue.

The protein belongs to the peptidase C69 family.

The catalysed reaction is an L-aminoacyl-L-amino acid + H2O = 2 an L-alpha-amino acid. This Lactococcus lactis subsp. lactis (strain IL1403) (Streptococcus lactis) protein is Probable dipeptidase B (pepDB).